Reading from the N-terminus, the 121-residue chain is uncharacterized protein (121 aa).

The protein localises to the mitochondrion. This is an uncharacterized protein from Arabidopsis thaliana (Mouse-ear cress).